The following is a 438-amino-acid chain: uncharacterized protein (438 aa).

The first 32 residues, 1–32 (MARPLLGKTSSVRRRLESLSACSIFFFLRKFC), serve as a signal peptide directing secretion.

This is an uncharacterized protein from Frog virus 3 (isolate Goorha) (FV-3).